We begin with the raw amino-acid sequence, 815 residues long: RNA-binding protein 5 (815 aa).

The tract at residues 1–93 (MGSDKRVSRT…EHDYRHDISD (93 aa)) is disordered. A phosphoserine mark is found at Ser18, Ser59, Ser69, Ser72, and Ser78. In terms of domain architecture, RRM 1 spans 98–178 (KTIMLRGLPI…KHIAMHYSNP (81 aa)). A RanBP2-type zinc finger spans residues 181–210 (KFEDWLCNKCCLNNFRKRLKCFRCGADKFD). The RRM 2 domain maps to 231–315 (DTIILRNIAP…KTIGVDFAKS (85 aa)). The interval 321–809 (VLSDGNRVSA…KDAVRKAMFA (489 aa)) is required for interaction with U2AF2. Residues 411-422 (QSPQLYNQTSNP) are compositionally biased toward polar residues. Disordered regions lie at residues 411 to 468 (QSPQ…DESS) and 507 to 540 (PAAESSSHQQSGLPPAKEGKEKKEKPKSKTAQQI). Residues 426–446 (PTEEAQPSTSTSTQAPAASPT) show a composition bias toward low complexity. Position 444 is a phosphoserine (Ser444). The segment at 452 to 535 (TKYAVPDTST…KEKKEKPKSK (84 aa)) is sufficient for interaction with ACIN1, PRPF8, SFRS3, SNRPB, SNRPN, SNRNP70 and SNRNP200. Phosphoserine is present on residues Ser621 and Ser624. The C2H2-type; atypical zinc-finger motif lies at 647-677 (MACLLCRRQFPNKDALVRHQQLSDLHKQNMD). In terms of domain architecture, G-patch spans 743 to 789 (HSNIGNKMLQAMGWREGSGLGRKCQGITAPIEAQVRLKGAGLGAKGS).

Belongs to the RBM5/RBM10 family. In terms of assembly, component of the spliceosome A complex (also known as the prespliceosome). Appears to dissociate from the spliceosome upon formation of the spliceosome B complex (also known as the precatalytic spliceosome), in which the heterotrimeric U4/U6.U5 snRNPs are bound. Interacts with U2AF2; this interaction is direct. Also interacts with ACIN1, PRPF8, SFRS3, SNRPB, SNRPN, SNRNP70 and SNRNP200; these interactions may be indirect. Isoform 5 is widely expressed in normal tissues and is expressed at increased levels in T-leukemic cell lines.

The protein localises to the nucleus. Functionally, component of the spliceosome A complex. Binds to ssRNA containing the consensus sequence 5'-AGGUAA-3'. Regulates alternative splicing of a number of mRNAs. May modulate splice site pairing after recruitment of the U1 and U2 snRNPs to the 5' and 3' splice sites of the intron. May both positively and negatively regulate apoptosis by regulating the alternative splicing of several genes involved in this process, including FAS and CASP2/caspase-2. In the case of FAS, promotes exclusion of exon 6 thereby producing a soluble form of FAS that inhibits apoptosis. In the case of CASP2/caspase-2, promotes exclusion of exon 9 thereby producing a catalytically active form of CASP2/Caspase-2 that induces apoptosis. This chain is RNA-binding protein 5 (RBM5), found in Homo sapiens (Human).